We begin with the raw amino-acid sequence, 571 residues long: MGVDGELKKKKCIIAGVITALLVLMVVAVGITTSRNTSHSEKIVPVQIKTATTAVEAVCAPTDYKETCVNSLMKASPDSTQPLDLIKLGFNVTIRSIEDSIKKASVELTAKAANDKDTKGALELCEKLMNDATDDLKKCLDNFDGFSIPQIEDFVEDLRVWLSGSIAYQQTCMDTFEETNSKLSQDMQKIFKTSRELTSNGLAMITNISNLLGEFNVTGVTGDLGKYARKLLSAEDGIPSWVGPNTRRLMATKGGVKANVVVAHDGSGQYKTINEALNAVPKANQKPFVIYIKQGVYNEKVDVTKKMTHVTFIGDGPTKTKITGSLNYYIGKVKTYLTATVAINGDNFTAKNIGFENTAGPEGHQAVALRVSADLAVFYNCQIDGYQDTLYVHSHRQFFRDCTVSGTVDFIFGDGIVVLQNCNIVVRKPMKSQSCMITAQGRSDKRESTGLVLQNCHITGEPAYIPVKSINKAYLGRPWKEFSRTIIMGTTIDDVIDPAGWLPWNGDFALNTLYYAEYENNGPGSNQAQRVKWPGIKKLSPKQALRFTPARFLRGNLWIPPNRVPYMGNFQ.

An N-terminal signal peptide occupies residues Met-1–Ala-28. N-linked (GlcNAc...) asparagine glycans are attached at residues Asn-36, Asn-91, Asn-207, and Asn-216. Residues Lys-49–Met-204 form a pectinesterase inhibitor 58 region. Residues Asn-259–Asn-556 form a pectinesterase 58 region. Thr-335 contacts substrate. Residue Asn-347 is glycosylated (N-linked (GlcNAc...) asparagine). Position 365 (Gln-365) interacts with substrate. Asp-388 (proton donor; for pectinesterase activity) is an active-site residue. Residues Cys-402 and Cys-422 are joined by a disulfide bond. Asp-409 acts as the Nucleophile; for pectinesterase activity in catalysis. 2 residues coordinate substrate: Arg-477 and Trp-479.

The protein in the N-terminal section; belongs to the PMEI family. It in the C-terminal section; belongs to the pectinesterase family. As to expression, expressed in siliques, but not in flower buds.

Its subcellular location is the secreted. The protein localises to the cell wall. It carries out the reaction [(1-&gt;4)-alpha-D-galacturonosyl methyl ester](n) + n H2O = [(1-&gt;4)-alpha-D-galacturonosyl](n) + n methanol + n H(+). The protein operates within glycan metabolism; pectin degradation; 2-dehydro-3-deoxy-D-gluconate from pectin: step 1/5. Its function is as follows. Acts in the modification of cell walls via demethylesterification of cell wall pectin. The protein is Probable pectinesterase/pectinesterase inhibitor 58 (PME58) of Arabidopsis thaliana (Mouse-ear cress).